Consider the following 84-residue polypeptide: uncharacterized protein (84 aa).

It belongs to the csb family.

This is an uncharacterized protein from Dictyostelium discoideum (Social amoeba).